We begin with the raw amino-acid sequence, 332 residues long: MHSPKSFLLLAVVFVALRVTAAPLWNAKNPEQLQYIAARCMEEWSPKAKDPKAALKNWMEWKLQPSNEEATQCYTKCMLENIGYYEPGEKRLKGVRVMQQWETFNRYQSADRNKVHDLTDTFDFIKPLKSSSCSDVFNAYKDVHAKHLETIKAILFCDGKSAEKYYKDKGKNVKQKGESIFVHCEEIHYPVGSPQRNELCKVRKYELGTGKPFENLMECIFKGVRYFNDKNELNIDEIARDFTQVGKKPDAVKAAMENCKSKTKETDPGKKAVEYYKCLLADSKVKKDFMEAFDYREIRSKDYYAQITGKLKPYSASDVRKEVNDIDSNKCV.

The first 21 residues, 1–21, serve as a signal peptide directing secretion; that stretch reads MHSPKSFLLLAVVFVALRVTA. 2 cysteine pairs are disulfide-bonded: C40/C77 and C73/C133. Residue W61 coordinates leukotriene E4. K176 is a binding site for leukotriene E4. 3 disulfide bridges follow: C184/C219, C200/C331, and C259/C278. Noradrenaline is bound by residues E185 and R203. The noradrenaline site is built by D294 and E297.

It belongs to the PBP/GOBP family. In terms of tissue distribution, female mosquito salivary gland (at protein level).

Its subcellular location is the secreted. Functionally, modulates blood feeding of female mosquitoes on vertebrate species by binding and sequestering different mediators involved in the host response, such as biogenic amines and eicosanoids. Binds dopamine, serotonin, histamine, tryptamine, adrenaline, noradrenaline, leukotriene B4, leukotriene C4, leukotriene D4, leukotriene E4 and U-46619, a stable analog of thromboxane A2. Inhibits platelet aggregation induced by serotonin and low doses of thromboxane A2 analog U-46619 but not by high doses of U-46619, collagen or ADP. Prevents leukocyte recruitment. This chain is Long form salivary protein D7L1, found in Aedes albopictus (Asian tiger mosquito).